Consider the following 33-residue polypeptide: Mu-theraphotoxin-Tp1a (33 aa).

3 disulfide bridges follow: C2/C17, C9/C22, and C16/C29. I33 carries the post-translational modification Isoleucine amide.

The protein belongs to the neurotoxin 10 (Hwtx-1) family. 55 (ProTx-III) subfamily. In terms of tissue distribution, expressed by the venom gland.

It is found in the secreted. Functionally, inhibits voltage-gated sodium channels without significantly altering the voltage dependence of activation or inactivation. Preferentially inhibits human Nav1.7/SCN9A (IC(50)=2.1 nM) &gt; human Nav1.6/SCN8A &gt; human Nav1.2/SCN2A &gt; human Nav1.1/SCN1A &gt; human Nav1.3/SCN3A channels. Exhibits analgesic properties by reversing spontaneous pain induced in mice by intraplantar injection with OD1 (AC P84646), a scorpion toxin that potentiates human Nav1.7/SCN9A. The sequence is that of Mu-theraphotoxin-Tp1a from Thrixopelma pruriens (Peruvian green velvet tarantula).